The chain runs to 296 residues: Sulfotransferase 1C2 (296 aa).

Position 49–54 (49–54 (KSGTTW)) interacts with 3'-phosphoadenylyl sulfate. 107 to 109 (RTH) contributes to the substrate binding site. The active-site Proton acceptor is His-109. Residues Arg-131, Ser-139, Tyr-194, and 228-233 (TSFEKM) contribute to the 3'-phosphoadenylyl sulfate site. Ser-139 bears the Phosphoserine mark. A Phosphoserine modification is found at Ser-254. Position 256–260 (256–260 (FMRKG)) interacts with 3'-phosphoadenylyl sulfate.

This sequence belongs to the sulfotransferase 1 family. Highly expressed in kidney and at lower levels in stomach and liver. More specifically found in the epithelia of proximal tubules of the kidney, of the bile duct, of the gastric mucosa, and in hepatocytes.

The protein localises to the cytoplasm. It localises to the lysosome. It is found in the mitochondrion. The catalysed reaction is a phenol + 3'-phosphoadenylyl sulfate = an aryl sulfate + adenosine 3',5'-bisphosphate + H(+). It catalyses the reaction cholesterol + 3'-phosphoadenylyl sulfate = cholesterol sulfate + adenosine 3',5'-bisphosphate + H(+). Its function is as follows. Sulfotransferase that utilizes 3'-phospho-5'-adenylyl sulfate (PAPS) to catalyze the sulfate conjugation of phenolic compounds. Does not transfer sulfate to steroids, dopamine, acetaminophen, or alpha-naphthol. Except in mitochondria, where it can add sulfate to cholesterol producing cholesterol sulfate, which alters mitochondrial membrane organization, and impacts protein complex mobility increasing state-III respiration, thereby modulating mitochondrial respiration. Catalyzes the sulfation of the carcinogenic N-hydroxy-2-acetylaminofluorene leading to highly reactive intermediates capable of forming DNA adducts, potentially resulting in mutagenesis. This is Sulfotransferase 1C2 (Sult1c2) from Rattus norvegicus (Rat).